Consider the following 378-residue polypeptide: Acid phosphatase-like protein XcAP-2 (378 aa).

The first 19 residues, 1–19, serve as a signal peptide directing secretion; the sequence is MKTTILLLVVLTIVQLSKA. Cystine bridges form between Cys-147/Cys-374, Cys-168/Cys-220, and Cys-347/Cys-351.

The protein belongs to the histidine acid phosphatase family.

The protein localises to the secreted. In terms of biological role, probably modulates blood feeding of fleas on vertebrate species by binding and sequestering different mediators involved in the host response. Binds histamine. Binds leukotriene B4, leukotriene C4, leukotriene D4 and leukotriene E4. Does not bind serotonin, adrenaline, noradrenaline, ADP, and stable analogs of thromboxane A2: U-46619 and cTXA2. The sequence is that of Acid phosphatase-like protein XcAP-2 from Xenopsylla cheopis (Oriental rat flea).